The primary structure comprises 374 residues: Proteasomal ubiquitin receptor ADRM1 homolog (374 aa).

The region spanning 13-131 is the Pru domain; sequence SSSGHIVEFK…KKVTDALNKP (119 aa). Disordered regions lie at residues 126–166, 187–223, and 334–374; these read DALN…MNAP, SDTL…NPLS, and ANLT…MDVD. Polar residues-rich tracts occupy residues 141–163 and 209–223; these read SAGS…SSDM and PSTN…NPLS. The 108-residue stretch at 239–346 folds into the DEUBAD domain; it reads SQKKEVAVSL…TKAEGGEDAA (108 aa). Residues 354 to 368 show a composition bias toward basic and acidic residues; that stretch reads DATREPEPKRNRPDN.

This sequence belongs to the ADRM1 family. In terms of assembly, component of the 19S proteasome regulatory particle complex. The 26S proteasome consists of a 20S core particle (CP) and two 19S regulatory subunits (RP). Interacts with deubiquitinase ubh-4.

It localises to the cytoplasm. Its subcellular location is the nucleus. In terms of biological role, may function as a proteasomal ubiquitin receptor. May promote the deubiquitinating activity associated with the 26S proteasome. The protein is Proteasomal ubiquitin receptor ADRM1 homolog of Caenorhabditis elegans.